Consider the following 261-residue polypeptide: Flap endonuclease Xni (261 aa).

Asp105 lines the Mg(2+) pocket. The 5'-3' exonuclease domain maps to 164–256 (SQFLDLMALA…DFRVNSPTKA (93 aa)). Leu172, Ala173, Pro181, Ile183, and Ile186 together coordinate K(+). The segment at 185–190 (GIGPKS) is interaction with DNA.

The protein belongs to the Xni family. Requires Mg(2+) as cofactor. It depends on K(+) as a cofactor.

Has flap endonuclease activity. During DNA replication, flap endonucleases cleave the 5'-overhanging flap structure that is generated by displacement synthesis when DNA polymerase encounters the 5'-end of a downstream Okazaki fragment. This chain is Flap endonuclease Xni, found in Shewanella oneidensis (strain ATCC 700550 / JCM 31522 / CIP 106686 / LMG 19005 / NCIMB 14063 / MR-1).